We begin with the raw amino-acid sequence, 195 residues long: MSIPTVIAFSGNIGAGKSTLLRGLEAAGYEVVPEDFSRWGQLFEMALEDPNRWKFSSQLKIMLIQSEIQRAAKKSDNRVVVLERTTECVLDFCNVAMEQGQILPAEHDMLVQIWEKVNVPVDAKIFLNTPPEKCMERIAFRGRAFERDIPVEYLSSLHSKFTRDPDYIMSGLESKEVVLANAIELIEKIVSRNVR.

The polypeptide is Putative deoxynucleoside kinase (Frog virus 3 (isolate Goorha) (FV-3)).